Reading from the N-terminus, the 149-residue chain is Probable flagellum biosynthesis repressor protein FlbT (149 aa).

Belongs to the FlbT family.

Its function is as follows. Has a post-transcriptional repressor function in flagellum biogenesis. Associates with the 5'-UTR of fljK mRNA and promotes its degradation. This chain is Probable flagellum biosynthesis repressor protein FlbT, found in Sinorhizobium medicae (strain WSM419) (Ensifer medicae).